A 189-amino-acid chain; its full sequence is Interferon alpha-1 (189 aa).

Residues 1 to 23 form the signal peptide; the sequence is MAPTSAFLTALVLLSCNAICSLG. Disulfide bonds link Cys-24-Cys-122 and Cys-52-Cys-162.

This sequence belongs to the alpha/beta interferon family. Interacts with CR2.

Its subcellular location is the secreted. In terms of biological role, produced by macrophages, IFN-alpha have antiviral activities. Interferon stimulates the production of two enzymes: a protein kinase and an oligoadenylate synthetase. The polypeptide is Interferon alpha-1 (Sus scrofa (Pig)).